The sequence spans 276 residues: Ribosomal RNA large subunit methyltransferase E (276 aa).

S-adenosyl-L-methionine-binding residues include glycine 52, phenylalanine 54, aspartate 72, aspartate 90, and aspartate 114. Residue lysine 154 is the Proton acceptor of the active site. Over residues 203-249 (RAAPTANATPTPTSTSTSTPTSTSTPTSTSTSTPAPTLTQTQTQTPK) the composition is skewed to low complexity. Positions 203-276 (RAAPTANATP…AKTGASRRTR (74 aa)) are disordered. Residues 265-276 (AKAKTGASRRTR) are compositionally biased toward basic residues.

It belongs to the class I-like SAM-binding methyltransferase superfamily. RNA methyltransferase RlmE family.

It is found in the cytoplasm. The enzyme catalyses uridine(2552) in 23S rRNA + S-adenosyl-L-methionine = 2'-O-methyluridine(2552) in 23S rRNA + S-adenosyl-L-homocysteine + H(+). Functionally, specifically methylates the uridine in position 2552 of 23S rRNA at the 2'-O position of the ribose in the fully assembled 50S ribosomal subunit. This is Ribosomal RNA large subunit methyltransferase E from Anaeromyxobacter sp. (strain Fw109-5).